A 483-amino-acid polypeptide reads, in one-letter code: Isocitrate dehydrogenase [NADP] (483 aa).

Thr-74 provides a ligand contact to NADP(+). Residues Ser-83, Asn-85, Arg-89, Arg-99, and Arg-121 each coordinate D-threo-isocitrate. Asp-232 serves as a coordination point for Mg(2+). Residues 264–270 (HGSAPDI) and Asn-277 contribute to the NADP(+) site.

Belongs to the isocitrate and isopropylmalate dehydrogenases family. Homodimer. The cofactor is Mg(2+). Requires Mn(2+) as cofactor.

The catalysed reaction is D-threo-isocitrate + NADP(+) = 2-oxoglutarate + CO2 + NADPH. Catalyzes the oxidative decarboxylation of isocitrate to 2-oxoglutarate and carbon dioxide with the concomitant reduction of NADP(+). This is Isocitrate dehydrogenase [NADP] (icd) from Rickettsia bellii (strain RML369-C).